The following is a 252-amino-acid chain: MTDPFTSDGAKMPPKPFTIEAGRRQVRSFVLRQGRFTSAQQRAFDELWPRFGLEYLGTPRDLAATFGRDTHKVLEIGFGNGAALRFAAQQDPSRDYIGIEVHAPGVGRLLNALEEDGSTHVRLYHHDAVEVLEHEIADGALDEVRIYFPDPWHKKRHNKRRLIQPAFAQLLVRKLRDGGRLHAATDWADYAEQMWDVLDATPGLVNRAGPRGHVERPAWRPQTHFETRGQKLGHGVWDLVYDRDPGVGSGDA.

Glu75, Glu100, Asp127, and Asp150 together coordinate S-adenosyl-L-methionine. Residue Asp150 is part of the active site. Residue Lys154 coordinates substrate. Residues 156-161 (RHNKRR) form an interaction with RNA region. Residues Asp186 and 223–226 (THFE) each bind substrate.

Belongs to the class I-like SAM-binding methyltransferase superfamily. TrmB family.

It catalyses the reaction guanosine(46) in tRNA + S-adenosyl-L-methionine = N(7)-methylguanosine(46) in tRNA + S-adenosyl-L-homocysteine. Its pathway is tRNA modification; N(7)-methylguanine-tRNA biosynthesis. Its function is as follows. Catalyzes the formation of N(7)-methylguanine at position 46 (m7G46) in tRNA. In Xanthomonas oryzae pv. oryzae (strain MAFF 311018), this protein is tRNA (guanine-N(7)-)-methyltransferase.